Here is a 361-residue protein sequence, read N- to C-terminus: MTQCPQEMITPGHGIIADALIMHGLIKILHIEGKMEGWAERRGERFVVCAERPDLNWIDQWEPMELLEIAAEFKAKGKDRASEEEEQRPYFGLVHDLSRSTVDPGNFSSWISDVREALYALKADFDLSEEHKEKRGEGRARSKKRGYYTLYLPLSGVYGKYVVENYGIRQSQYAVCATCFALSTLGYIYGTVKARVERRSSSGGGHDVFNLTFIPRERTSLRSLMALQRMAGLVEMRPGDLNELGAVVYMLSVGETIYAVREGVDILVWVTQRAGNFQRTVGVNIFRGDRLLEAIAEIKYRAPSWPKIARQLGSSLNVLGEYLAFGGDVYHVIRSVMADLGRKGGKLAGLEGLAEALKKIG.

As to quaternary structure, monomer. Can form a Cascade complex with Csa5, Cas7, Cas5a, Cas3 and Cas3'.

Functionally, CRISPR (clustered regularly interspaced short palindromic repeat) is an adaptive immune system that provides protection against mobile genetic elements (viruses, transposable elements and conjugative plasmids). CRISPR clusters contain sequences complementary to antecedent mobile elements and target invading nucleic acids. CRISPR clusters are transcribed and processed into CRISPR RNA (crRNA). The protein is CRISPR system associated protein Cas8 (cas8a2) of Thermoproteus tenax (strain ATCC 35583 / DSM 2078 / JCM 9277 / NBRC 100435 / Kra 1).